Consider the following 860-residue polypeptide: Alanine--tRNA ligase (860 aa).

His553, His557, Cys655, and His659 together coordinate Zn(2+).

It belongs to the class-II aminoacyl-tRNA synthetase family. The cofactor is Zn(2+).

The protein localises to the cytoplasm. It carries out the reaction tRNA(Ala) + L-alanine + ATP = L-alanyl-tRNA(Ala) + AMP + diphosphate. In terms of biological role, catalyzes the attachment of alanine to tRNA(Ala) in a two-step reaction: alanine is first activated by ATP to form Ala-AMP and then transferred to the acceptor end of tRNA(Ala). Also edits incorrectly charged Ser-tRNA(Ala) and Gly-tRNA(Ala) via its editing domain. The polypeptide is Alanine--tRNA ligase (Legionella pneumophila (strain Paris)).